Consider the following 372-residue polypeptide: Cytochrome b (372 aa).

4 helical membrane-spanning segments follow: residues 32–52 (LGFN…CLSW), 77–99 (FIIR…IHII), 114–134 (VWFF…IGYT), and 180–200 (LHSI…AHFF). Positions 83 and 97 each coordinate heme b. His184 and His198 together coordinate heme b. His203 provides a ligand contact to a ubiquinone. 4 consecutive transmembrane segments (helical) span residues 228-248 (YYLR…YYIC), 297-317 (LLFV…LIFI), 330-350 (LVLF…VLCF), and 351-371 (PLWM…VCRL).

It belongs to the cytochrome b family. The main subunits of complex b-c1 are: cytochrome b, cytochrome c1 and the Rieske protein. Requires heme b as cofactor.

Its subcellular location is the mitochondrion inner membrane. Its function is as follows. Component of the ubiquinol-cytochrome c reductase complex (complex III or cytochrome b-c1 complex) that is part of the mitochondrial respiratory chain. The b-c1 complex mediates electron transfer from ubiquinol to cytochrome c. Contributes to the generation of a proton gradient across the mitochondrial membrane that is then used for ATP synthesis. In Trypanoplasma borreli, this protein is Cytochrome b (MT-CYB).